We begin with the raw amino-acid sequence, 253 residues long: Phycobilisome rod-core linker polypeptide CpcG4 (253 aa).

In terms of domain architecture, PBS-linker spans 11 to 191 (SSQNHRVTSF…DFQEKAGTVQ (181 aa)).

The protein belongs to the phycobilisome linker protein family. As to quaternary structure, part of the phycobilisome, a hemidiscoidal structure that is composed of two distinct substructures: a core complex and a number of rods radiating from the core.

Its subcellular location is the cellular thylakoid membrane. Its function is as follows. Rod-core linker protein required for attachment of phycocyanin to allophycocyanin in cores of phycobilisomes. Functionally, linker polypeptides determine the state of aggregation and the location of the disk-shaped phycobiliprotein units within the phycobilisome and modulate their spectroscopic properties in order to mediate a directed and optimal energy transfer. This chain is Phycobilisome rod-core linker polypeptide CpcG4, found in Nostoc sp. (strain PCC 7120 / SAG 25.82 / UTEX 2576).